The primary structure comprises 523 residues: UvrABC system protein C (523 aa).

Positions 15 to 93 (HLPGCYLFKD…IKKHWPRYNI (79 aa)) constitute a GIY-YIG domain. Positions 197–232 (RELIESMETEMKEMAAKQMFEQAMELRDEIAALEYL) constitute a UVR domain.

This sequence belongs to the UvrC family. As to quaternary structure, interacts with UvrB in an incision complex.

Its subcellular location is the cytoplasm. Functionally, the UvrABC repair system catalyzes the recognition and processing of DNA lesions. UvrC both incises the 5' and 3' sides of the lesion. The N-terminal half is responsible for the 3' incision and the C-terminal half is responsible for the 5' incision. The chain is UvrABC system protein C from Methanosarcina mazei (strain ATCC BAA-159 / DSM 3647 / Goe1 / Go1 / JCM 11833 / OCM 88) (Methanosarcina frisia).